The chain runs to 567 residues: Phosphoglucomutase-like protein 5 (567 aa).

Residues 1 to 26 (MEGSPIPVLTVPTAPYEDQRPTGGGG) form a disordered region. Threonine 120 bears the Phosphothreonine mark. Serine 122 is subject to Phosphoserine.

It belongs to the phosphohexose mutase family. In terms of assembly, interacts with DMD/dystrophin; the interaction is direct. Interacts with UTRN/utrophin.

Its subcellular location is the cell junction. It localises to the adherens junction. The protein resides in the cytoplasm. It is found in the cytoskeleton. The protein localises to the cell membrane. Its subcellular location is the sarcolemma. Its function is as follows. Component of adherens-type cell-cell and cell-matrix junctions. Has no phosphoglucomutase activity in vitro. The polypeptide is Phosphoglucomutase-like protein 5 (Mus musculus (Mouse)).